The following is a 195-amino-acid chain: Nucleoside triphosphate pyrophosphatase (195 aa).

Residue aspartate 70 is the Proton acceptor of the active site.

This sequence belongs to the Maf family. The cofactor is a divalent metal cation.

It is found in the cytoplasm. It carries out the reaction a ribonucleoside 5'-triphosphate + H2O = a ribonucleoside 5'-phosphate + diphosphate + H(+). The catalysed reaction is a 2'-deoxyribonucleoside 5'-triphosphate + H2O = a 2'-deoxyribonucleoside 5'-phosphate + diphosphate + H(+). In terms of biological role, nucleoside triphosphate pyrophosphatase. May have a dual role in cell division arrest and in preventing the incorporation of modified nucleotides into cellular nucleic acids. In Synechocystis sp. (strain ATCC 27184 / PCC 6803 / Kazusa), this protein is Nucleoside triphosphate pyrophosphatase.